The chain runs to 304 residues: Acetyl-coenzyme A carboxylase carboxyl transferase subunit beta (304 aa).

The CoA carboxyltransferase N-terminal domain occupies 23 to 292 (VWTKCDSCGQ…PNPEAPREGV (270 aa)). Zn(2+)-binding residues include C27, C30, C46, and C49. The segment at 27-49 (CDSCGQVLYRAELERNLEVCPKC) adopts a C4-type zinc-finger fold. The tract at residues 285-304 (PEAPREGVVVPPVPDQEPEA) is disordered. A compositionally biased stretch (pro residues) spans 295–304 (PPVPDQEPEA).

It belongs to the AccD/PCCB family. As to quaternary structure, acetyl-CoA carboxylase is a heterohexamer composed of biotin carboxyl carrier protein (AccB), biotin carboxylase (AccC) and two subunits each of ACCase subunit alpha (AccA) and ACCase subunit beta (AccD). The cofactor is Zn(2+).

The protein localises to the cytoplasm. The enzyme catalyses N(6)-carboxybiotinyl-L-lysyl-[protein] + acetyl-CoA = N(6)-biotinyl-L-lysyl-[protein] + malonyl-CoA. It functions in the pathway lipid metabolism; malonyl-CoA biosynthesis; malonyl-CoA from acetyl-CoA: step 1/1. Component of the acetyl coenzyme A carboxylase (ACC) complex. Biotin carboxylase (BC) catalyzes the carboxylation of biotin on its carrier protein (BCCP) and then the CO(2) group is transferred by the transcarboxylase to acetyl-CoA to form malonyl-CoA. The chain is Acetyl-coenzyme A carboxylase carboxyl transferase subunit beta from Shigella sonnei (strain Ss046).